The primary structure comprises 499 residues: Aspartyl/glutamyl-tRNA(Asn/Gln) amidotransferase subunit B (499 aa).

This sequence belongs to the GatB/GatE family. GatB subfamily. In terms of assembly, heterotrimer of A, B and C subunits.

The enzyme catalyses L-glutamyl-tRNA(Gln) + L-glutamine + ATP + H2O = L-glutaminyl-tRNA(Gln) + L-glutamate + ADP + phosphate + H(+). The catalysed reaction is L-aspartyl-tRNA(Asn) + L-glutamine + ATP + H2O = L-asparaginyl-tRNA(Asn) + L-glutamate + ADP + phosphate + 2 H(+). Functionally, allows the formation of correctly charged Asn-tRNA(Asn) or Gln-tRNA(Gln) through the transamidation of misacylated Asp-tRNA(Asn) or Glu-tRNA(Gln) in organisms which lack either or both of asparaginyl-tRNA or glutaminyl-tRNA synthetases. The reaction takes place in the presence of glutamine and ATP through an activated phospho-Asp-tRNA(Asn) or phospho-Glu-tRNA(Gln). This chain is Aspartyl/glutamyl-tRNA(Asn/Gln) amidotransferase subunit B, found in Mesorhizobium japonicum (strain LMG 29417 / CECT 9101 / MAFF 303099) (Mesorhizobium loti (strain MAFF 303099)).